Here is a 619-residue protein sequence, read N- to C-terminus: Threonine--tRNA ligase (619 aa).

An editing domain region spans residues 1–143 (MQLLLIHSDF…SRSIRIGEGE (143 aa)). Residues 201 to 500 (PHVELMRRLE…AANGGLPMLP (300 aa)) form a catalytic region. Cys293, His345, and His469 together coordinate Zn(2+).

It belongs to the class-II aminoacyl-tRNA synthetase family. Homodimer. The cofactor is Zn(2+).

The protein resides in the cytoplasm. It catalyses the reaction tRNA(Thr) + L-threonine + ATP = L-threonyl-tRNA(Thr) + AMP + diphosphate + H(+). In terms of biological role, catalyzes the attachment of threonine to tRNA(Thr) in a two-step reaction: L-threonine is first activated by ATP to form Thr-AMP and then transferred to the acceptor end of tRNA(Thr). Also edits incorrectly charged L-seryl-tRNA(Thr). The polypeptide is Threonine--tRNA ligase (Methanothrix thermoacetophila (strain DSM 6194 / JCM 14653 / NBRC 101360 / PT) (Methanosaeta thermophila)).